A 414-amino-acid polypeptide reads, in one-letter code: Serine--tRNA ligase (414 aa).

230 to 232 (TAE) contacts L-serine. An ATP-binding site is contributed by 261 to 263 (RKE). Glutamate 284 provides a ligand contact to L-serine. 348-351 (EISS) contacts ATP. Serine 382 is an L-serine binding site.

Belongs to the class-II aminoacyl-tRNA synthetase family. Type-1 seryl-tRNA synthetase subfamily. In terms of assembly, homodimer. The tRNA molecule binds across the dimer.

Its subcellular location is the cytoplasm. The catalysed reaction is tRNA(Ser) + L-serine + ATP = L-seryl-tRNA(Ser) + AMP + diphosphate + H(+). It carries out the reaction tRNA(Sec) + L-serine + ATP = L-seryl-tRNA(Sec) + AMP + diphosphate + H(+). It functions in the pathway aminoacyl-tRNA biosynthesis; selenocysteinyl-tRNA(Sec) biosynthesis; L-seryl-tRNA(Sec) from L-serine and tRNA(Sec): step 1/1. Its function is as follows. Catalyzes the attachment of serine to tRNA(Ser). Is also able to aminoacylate tRNA(Sec) with serine, to form the misacylated tRNA L-seryl-tRNA(Sec), which will be further converted into selenocysteinyl-tRNA(Sec). This is Serine--tRNA ligase from Sulfurovum sp. (strain NBC37-1).